The following is a 222-amino-acid chain: Large ribosomal subunit protein uL1 (222 aa).

Belongs to the universal ribosomal protein uL1 family. In terms of assembly, part of the 50S ribosomal subunit.

In terms of biological role, binds directly to 23S rRNA. Probably involved in E site tRNA release. Functionally, protein L1 is also a translational repressor protein, it controls the translation of its operon by binding to its mRNA. The chain is Large ribosomal subunit protein uL1 from Pyrobaculum neutrophilum (strain DSM 2338 / JCM 9278 / NBRC 100436 / V24Sta) (Thermoproteus neutrophilus).